Reading from the N-terminus, the 113-residue chain is Large ribosomal subunit protein bL17 (113 aa).

Belongs to the bacterial ribosomal protein bL17 family. In terms of assembly, part of the 50S ribosomal subunit. Contacts protein L32.

The protein is Large ribosomal subunit protein bL17 of Caldicellulosiruptor saccharolyticus (strain ATCC 43494 / DSM 8903 / Tp8T 6331).